Consider the following 450-residue polypeptide: Glucose-6-phosphate isomerase (450 aa).

T38 is modified (phosphothreonine). The active-site Proton donor is the E290. Residues H311 and K425 contribute to the active site.

The protein belongs to the GPI family.

Its subcellular location is the cytoplasm. The catalysed reaction is alpha-D-glucose 6-phosphate = beta-D-fructose 6-phosphate. The protein operates within carbohydrate biosynthesis; gluconeogenesis. Its pathway is carbohydrate degradation; glycolysis; D-glyceraldehyde 3-phosphate and glycerone phosphate from D-glucose: step 2/4. Its function is as follows. Catalyzes the reversible isomerization of glucose-6-phosphate to fructose-6-phosphate. This chain is Glucose-6-phosphate isomerase, found in Bacillus subtilis (strain 168).